Here is a 503-residue protein sequence, read N- to C-terminus: EZH inhibitory protein (503 aa).

The span at 1-16 (MATQSDMEKEQKHQQD) shows a compositional bias: basic and acidic residues. Disordered regions lie at residues 1-72 (MATQ…AAAA), 97-462 (HSDR…RSIS), and 483-503 (VPPE…PPEP). The segment covering 41 to 72 (PAASVTTVSSQASPSGGAALSSSTAGSSAAAA) has biased composition (low complexity). The segment covering 97-107 (HSDRQDCRSPH) has biased composition (basic and acidic residues). Residues 184 to 197 (YPCSGASTSSQATQ) are compositionally biased toward polar residues. At serine 259 the chain carries Phosphoserine. Residues 345–366 (LRSRSTQQRSALLSRRSLSGSA) show a composition bias toward low complexity. Residues 401–409 (WHAVRMRAS) form a sufficient for interaction with EZH2 region. A necessary and sufficient for inhibition of PRC2/EED-EZH1 and PRC2/EED-EZH2 complex activity region spans residues 403 to 423 (AVRMRASSPSPPGRFFLPIPQ). The span at 428 to 453 (SSSSSYASNSSSPSRSPGLSPSSPSP) shows a compositional bias: low complexity.

Interacts with PRC2/EED-EZH1 complex member EZH1 and with PRC2/EED-EZH2 complex member EZH2; the interaction blocks EZH1/EZH2 methyltransferase activity. Interacts (via C-terminus) with SUZ12 which is a member of the PRC2/EED-EZH1 and PRC2/EED-EZH2 complexes. In terms of tissue distribution, in testis, detected in male germ cells inside the seminiferous tubules, especially in spermatogonia and round spermatids (at protein level). In the ovary, expressed in primordial follicles and oocytes but not the external follicle cells (at protein level).

Its subcellular location is the nucleus. The protein resides in the cytoplasm. In terms of biological role, inhibits PRC2/EED-EZH1 and PRC2/EED-EZH2 complex function by inhibiting EZH1/EZH2 methyltransferase activity, thereby causing down-regulation of histone H3 trimethylation on 'Lys-27' (H3K27me3). Probably inhibits methyltransferase activity by limiting the stimulatory effect of cofactors such as AEBP2 and JARID2. Inhibits H3K27me3 deposition during spermatogenesis and oogenesis. The chain is EZH inhibitory protein from Homo sapiens (Human).